Here is a 1483-residue protein sequence, read N- to C-terminus: Chromosome partition protein MukB (1483 aa).

34–41 contributes to the ATP binding site; that stretch reads GGNGAGKS. 7 coiled-coil regions span residues 326–418, 444–480, 509–601, 780–804, 837–923, 977–1115, and 1209–1265; these read LEAD…QYNQ, LETF…QAYQ, RHLA…MQRA, RAAC…FATL, EIRQ…AKLE, EMLS…TAKA, and VEAI…LQNV. A flexible hinge region spans residues 666-783; sequence PGGSEDQRLN…EVPLFGRAAC (118 aa).

It belongs to the SMC family. MukB subfamily. Homodimerization via its hinge domain. Binds to DNA via its C-terminal region. Interacts, and probably forms a ternary complex, with MukE and MukF via its C-terminal region. The complex formation is stimulated by calcium or magnesium. Interacts with tubulin-related protein FtsZ.

It is found in the cytoplasm. Its subcellular location is the nucleoid. Its function is as follows. Plays a central role in chromosome condensation, segregation and cell cycle progression. Functions as a homodimer, which is essential for chromosome partition. Involved in negative DNA supercoiling in vivo, and by this means organize and compact chromosomes. May achieve or facilitate chromosome segregation by condensation DNA from both sides of a centrally located replisome during cell division. The chain is Chromosome partition protein MukB from Shigella dysenteriae serotype 1 (strain Sd197).